The following is a 1027-amino-acid chain: Error-prone DNA polymerase (1027 aa).

The protein belongs to the DNA polymerase type-C family. DnaE2 subfamily.

The protein resides in the cytoplasm. The catalysed reaction is DNA(n) + a 2'-deoxyribonucleoside 5'-triphosphate = DNA(n+1) + diphosphate. Functionally, DNA polymerase involved in damage-induced mutagenesis and translesion synthesis (TLS). It is not the major replicative DNA polymerase. This chain is Error-prone DNA polymerase, found in Dechloromonas aromatica (strain RCB).